The primary structure comprises 547 residues: Chaperonin GroEL (547 aa).

ATP-binding positions include 30–33 (TLGP), Lys51, 87–91 (DGTTT), Gly415, 479–481 (NAA), and Asp495.

Belongs to the chaperonin (HSP60) family. In terms of assembly, forms a cylinder of 14 subunits composed of two heptameric rings stacked back-to-back. Interacts with the co-chaperonin GroES.

The protein localises to the cytoplasm. The catalysed reaction is ATP + H2O + a folded polypeptide = ADP + phosphate + an unfolded polypeptide.. Its function is as follows. Together with its co-chaperonin GroES, plays an essential role in assisting protein folding. The GroEL-GroES system forms a nano-cage that allows encapsulation of the non-native substrate proteins and provides a physical environment optimized to promote and accelerate protein folding. This Pseudomonas savastanoi pv. phaseolicola (strain 1448A / Race 6) (Pseudomonas syringae pv. phaseolicola (strain 1448A / Race 6)) protein is Chaperonin GroEL.